Reading from the N-terminus, the 18562-residue chain is Titin homolog (18562 aa).

One can recognise an Ig-like 1 domain in the interval 90–176; sequence PKFIQVIKAY…GVSTSYGYIT (87 aa). The interval 384–404 is disordered; that stretch reads RFHPQPPKPPRAGTSRRFLPE. Ig-like domains are found at residues 406–493, 821–913, 943–1038, and 1135–1225; these read PKFV…TQVT, PKIV…AFIN, PKFI…LTIS, and PRFE…LTVD. Cys842 and Cys897 form a disulfide bridge. Residues 1336-1360 form a disordered region; that stretch reads LPPVQKSMSVQEEKASSQRTPSPMN. In terms of domain architecture, Ig-like 6 spans 1679–1762; sequence PKFLRKLVNC…ASNVAGTTFS (84 aa). Cys1700 and Cys1751 are disulfide-bonded. 3 coiled-coil regions span residues 1766–1786, 2011–2038, and 2065–2085; these read LKLS…SEIK, QSLD…ERTS, and ISDQ…ALQE. The disordered stretch occupies residues 2155-2177; the sequence is RKGSDKDKRKATRIKRVPSAHSA. The span at 2163–2172 shows a compositional bias: basic residues; that stretch reads RKATRIKRVP. A coiled-coil region spans residues 2205–2231; sequence LKQNEEAKEIQELFVKIEKEINTIAEL. Disordered regions lie at residues 2298 to 2459 and 2614 to 2637; these read IIGI…TADA and KSSL…EVTA. Residues 2309 to 2323 are compositionally biased toward low complexity; it reads RRPSSTPRGSTRSSN. The segment covering 2324-2341 has biased composition (polar residues); sequence LTTSQDSQATTKMTVSSE. Positions 2606 to 2630 form a coiled coil; that stretch reads LMQTLASEKSSLKAAEEDEKEGEEE. The segment covering 2621–2636 has biased composition (acidic residues); the sequence is EEDEKEGEEEGEEEVT. Ig-like domains follow at residues 3095–3177 and 3179–3264; these read KEVM…SGLY and TERS…SFVS. A disordered region spans residues 3362 to 3692; sequence EVPKVAEPSE…NAEAQKVVDS (331 aa). The span at 3655-3665 shows a compositional bias: acidic residues; sequence SEEETPLEETN. Ig-like domains are found at residues 3789-3878, 3897-3985, and 4038-4125; these read PVFT…CEIV, PHFV…CTID, and PPYF…CVLT. 2 disulfides stabilise this stretch: Cys3919-Cys3969 and Cys4059-Cys4109. Disordered regions lie at residues 4553-4599, 4634-4699, 4750-4814, 4826-4855, 4912-4931, 4950-4969, 4989-5216, 5267-5294, 5306-5325, 5345-5372, 5428-6101, 6127-6157, 6214-6900, and 6930-8453; these read QSRE…SAPT, TVEP…EIVE, GSTA…TSEV, PVPE…EVQP, STAA…VESK, PETS…PVES, PETS…EILE, GSTA…EVEP, PETS…SVES, PETS…EVEP, GSTA…VEPT, VQVP…EVQP, STAA…ETSE, and APVE…DDKL. Positions 4555–4577 are enriched in basic and acidic residues; that stretch reads RELDNTERNFTVNKEKDESKKPS. PVET repeat units lie at residues 4599–4626, 4627–4665, 4666–4704, 4755–4787, 4788–4826, 4827–4865, 4917–4948, 4949–4987, 4988–5026, 5027–5065, 5066–5104, 5105–5143, 5144–5182, 5183–5221, 5273–5304, 5305–5343, 5344–5382, 5434–5465, 5466–5504, 5505–5543, 5544–5582, 5583–5621, 5622–5660, 5661–5699, 5700–5738, 5739–5777, 5778–5816, 5817–5855, 5856–5894, 5895–5933, 5934–5972, 5973–6011, 6012–6050, 6051–6089, 6090–6128, 6129–6167, 6219–6250, 6251–6289, 6290–6328, 6329–6367, 6368–6406, 6407–6445, 6446–6484, 6485–6523, 6524–6562, 6563–6601, 6602–6640, 6641–6679, 6680–6718, 6719–6757, 6758–6796, 6797–6835, 6836–6874, 6875–6913, 6914–6952, and 6953–6991; these read TVEK…KDVP, VPET…KDVP, VPET…KDVT, PAQE…KDVP, AQEP…KDVP, VPET…KVVP, VPET…KDVS, VPET…KDVQ, AHEP…KDVP, VPET…KDLP, VPET…KDVA, VPEA…KDVP, and VPEA…KLKK. Composition is skewed to basic and acidic residues over residues 4638 to 4651 and 4677 to 4691; these read TVEK…KETS and TVEK…EKSE. Positions 4960-4969 are enriched in basic and acidic residues; that stretch reads TVEKLKPVES. Positions 5038–5051 are enriched in basic and acidic residues; the sequence is TVEKLKPVESKETS. Basic and acidic residues-rich tracts occupy residues 5116–5129 and 5155–5168; these read TVEK…KETS. A coiled-coil region spans residues 5212–5235; it reads AEILEQKDVTCEEEIKELLTEVEV. A compositionally biased stretch (basic and acidic residues) spans 5316 to 5325; it reads TVEKLKSVES. Composition is skewed to basic and acidic residues over residues 5477–5490 and 5516–5529; these read TVEK…KETS. Basic and acidic residues-rich tracts occupy residues 6690–6704, 6729–6743, 6768–6782, 6807–6821, 6846–6860, and 6885–6899; these read PTKE…KETS. Composition is skewed to basic and acidic residues over residues 6972–7606, 7613–7630, 7637–8062, and 8069–8453; these read ESKE…DNFK, LQKE…DNFK, and LQKE…DDKL. Residues 6984-7812 adopt a coiled-coil conformation; that stretch reads QADAKLKKEK…DKLKQETDAK (829 aa). 96 BLUE repeats span residues 6992–6996, 6997–7012, 7013–7028, 7029–7044, 7045–7060, 7061–7076, 7077–7092, 7093–7108, 7109–7124, 7125–7140, 7141–7156, 7157–7172, 7173–7188, 7189–7204, 7205–7220, 7221–7236, 7237–7252, 7253–7268, 7269–7284, 7285–7300, 7301–7316, 7317–7332, 7333–7348, 7349–7364, 7365–7380, 7381–7396, 7397–7412, 7413–7428, 7429–7444, 7445–7460, 7461–7476, 7477–7492, 7493–7508, 7509–7524, 7525–7540, 7541–7556, 7557–7572, 7573–7588, 7589–7604, 7605–7620, 7621–7628, 7629–7644, 7645–7652, 7653–7668, 7669–7684, 7685–7700, 7701–7716, 7717–7732, 7733–7748, 7749–7764, 7765–7772, 7773–7788, 7789–7804, 7805–7820, 7821–7836, 7837–7852, 7853–7868, 7869–7884, 7885–7900, 7901–7916, 7917–7932, 7933–7948, 7949–7964, 7965–7980, 7981–7996, 7997–8012, 8013–8028, 8029–8044, 8045–8060, 8061–8076, 8077–8084, 8085–8100, 8101–8116, 8117–8132, 8133–8148, 8149–8164, 8165–8180, 8181–8196, 8197–8212, 8213–8228, 8229–8244, 8245–8260, 8261–8276, 8277–8292, 8293–8308, 8309–8324, 8325–8340, 8341–8356, 8357–8371, 8373–8388, 8389–8404, 8405–8420, 8421–8436, 8437–8452, 8453–8468, and 8469–8484; these read EKDDK, HKQE…NDDK, LKQE…NDDK, LKQE…KHDK, LKQE…KDDK, LKQD…KDDK, LKHE…KDDK, LKQE…KDDR, LKKD…KDDK, LKHE…KDDN, FKQE…KDDK, LKQEKDDN, LKQEKDDK, LKQEKNDK, LKQE…KDNK, LKQE…KDDN, LKQE…EKDD, and LKQE…KGDK. Positions 7876-8273 form a coiled coil; it reads KLKKEKDNKL…EADAKLKKDK (398 aa). Residues 8316 to 8490 adopt a coiled-coil conformation; the sequence is KLKKEKDNKL…KGDKLKLEDQ (175 aa). Residues 8599 to 8611 show a composition bias toward basic residues; it reads KHLKKKKKHHKKE. Residues 8599–8626 form a disordered region; sequence KHLKKKKKHHKKEKIAVKETEQDEKTVS. The span at 8612 to 8626 shows a compositional bias: basic and acidic residues; it reads KIAVKETEQDEKTVS. Residues 8950 to 9041 enclose the Fibronectin type-III 1 domain; the sequence is KPRKAQLVAL…EIIEVNTLDY (92 aa). Disordered stretches follow at residues 9079-9104, 9147-9436, 9481-9609, 9702-10224, 10239-10274, 10539-11018, 11030-11111, 11123-11213, 11225-11387, 11420-11592, 11624-11825, 11872-11955, 11996-12054, 12397-12418, 12537-12974, 13026-13045, 13065-13261, 13283-13514, 13553-13574, and 13594-13874; these read IEEH…LDSE, VQKI…AAAE, EEQS…ETES, ADAV…ESRI, ESDD…EDSP, QSAP…DSFT, EDAV…QKDQ, KKLA…QDKT, AKTT…SLTS, KGLN…NPEL, LTKK…SDNL, LSAH…TSLS, TNLI…LQKN, GRRV…RKKR, EESR…PAES, EAAK…TEVV, AAEA…LNDK, QAQA…EQLK, EEKQ…KLKL, and EKLA…RRTG. Residues 9084–9093 are compositionally biased toward basic residues; it reads KLKKKSKKSK. 2 stretches are compositionally biased toward basic and acidic residues: residues 9172–9184 and 9191–9202; these read VKKD…KKSL and TKKEIQGKPEKK. Residues 9213-9231 show a composition bias toward polar residues; that stretch reads SSISETSETLTKDLTQTKQ. A compositionally biased stretch (basic and acidic residues) spans 9232 to 9267; sequence SEPEPAKRTTETSVQDEVKRKTETTSKSKQTTEEHP. Residues 9273–9283 show a composition bias toward low complexity; the sequence is SDSSISSTSDA. Residues 9295-9332 are compositionally biased toward basic and acidic residues; that stretch reads EAQKVTEKPETAKLESKSKMTEDTTKESDNKETVDEKP. The span at 9346-9359 shows a compositional bias: low complexity; that stretch reads STISETSETSAVES. Residues 9371 to 9510 are a coiled coil; the sequence is AAVDKEKKQK…QTKAKAAEKQ (140 aa). 2 stretches are compositionally biased toward basic and acidic residues: residues 9373–9436 and 9481–9521; these read VDKE…AAAE and EEQS…KSNK. Residues 9547 to 9558 show a composition bias toward low complexity; it reads SSISQKSDTSKT. The stretch at 9577–9749 forms a coiled coil; sequence TSKQKETDKK…QTVEEQAKLD (173 aa). 2 stretches are compositionally biased toward basic and acidic residues: residues 9578 to 9609 and 9702 to 9783; these read SKQK…ETES and ADAV…DEKP. A compositionally biased stretch (polar residues) spans 9798-9809; sequence SISQKSVTSKTV. 3 stretches are compositionally biased toward basic and acidic residues: residues 9819–10004, 10040–10149, and 10162–10196; these read ETQK…DEKP, ETQK…KSEN, and VKSE…EPKE. Coiled-coil stretches lie at residues 9822 to 9995 and 10046 to 10129; these read KVAD…TEEA and EADK…TSKK. A compositionally biased stretch (basic residues) spans 10197–10206; the sequence is KKKIIKKKKD. Residues 10207–10224 are compositionally biased toward basic and acidic residues; that stretch reads TTKPQEASKELSSDESRI. Residues 10239 to 10250 are compositionally biased toward polar residues; sequence ESDDLSTASTIK. The Fibronectin type-III 2 domain maps to 10461 to 10553; it reads KPTSLQVTST…DTIEATTQAE (93 aa). Residues 10566 to 10609 show a composition bias toward basic and acidic residues; that stretch reads EKVKEPVSKKPENTKESEGHKKRDRKESEDHDENNLGKSGKDEF. Residues 10612–10637 show a composition bias toward polar residues; it reads SGESGTSNQNEESAQLNTSFTSTEQH. Over residues 10663-10680 the composition is skewed to acidic residues; the sequence is IDADVVEVEYDEQGDDIP. A compositionally biased stretch (basic and acidic residues) spans 10707 to 10716; it reads MAEKDSDAME. Positions 10779–10790 are enriched in polar residues; the sequence is ADQTGMSIQDLN. 2 stretches are compositionally biased toward basic and acidic residues: residues 10840–10852 and 10863–10884; these read QLDK…DDKM and KKPE…KESD. Polar residues predominate over residues 10961 to 10975; the sequence is LSTSEQVENASQNLG. 3 stretches are compositionally biased toward basic and acidic residues: residues 10999–11009, 11045–11055, and 11076–11089; these read IHGEAESKLGE, SAEKTSLEVRD, and SNRD…RDLN. A coiled-coil region spans residues 11018–11064; it reads TLQDLYEELKAKEDAVEAGAETSNADQSAEKTSLEVRDMKKKMKKKQ. Polar residues predominate over residues 11090–11108; that stretch reads TQHSNQTGEDESSTFNFGQ. The span at 11159-11173 shows a compositional bias: basic and acidic residues; it reads KKGEENEKTKFEAKH. Residues 11174 to 11187 are compositionally biased toward low complexity; that stretch reads LGSSSASDSLAEST. 3 stretches are compositionally biased toward basic and acidic residues: residues 11195-11211, 11271-11280, and 11295-11318; these read KGEV…KNQD, IPDKNRDSDK, and ESAE…EKTL. Positions 11374–11387 are enriched in polar residues; the sequence is SKVTTSFADESLTS. Composition is skewed to basic and acidic residues over residues 11440-11464 and 11472-11485; these read KVKD…KDQK and GSKD…EEKT. A compositionally biased stretch (polar residues) spans 11503 to 11515; that stretch reads MTDQKNVQESQYA. Composition is skewed to basic and acidic residues over residues 11624–11635, 11645–11669, and 11722–11735; these read LTKKQDENDAKK, AKKD…DSRE, and VSEK…EKTV. Residues 11754–11767 show a composition bias toward polar residues; the sequence is ESLNASSALSTTDV. Basic and acidic residues predominate over residues 11916-11937; sequence AEDKYVESRKKTTLKKKPEQKQ. Positions 12408-12428 form a coiled coil; that stretch reads ELDDAKKRKKRRIKRVVERRN. In terms of domain architecture, Ig-like 12 spans 12432 to 12547; that stretch reads PRLTQLIPPR…ESRDDDKSVD (116 aa). Basic and acidic residues-rich tracts occupy residues 12537-12547, 12555-12567, and 12609-12689; these read EESRDDDKSVD, LEEK…DKSK, and VGAK…KKDA. The span at 12690–12701 shows a compositional bias: low complexity; the sequence is SQPSSSKESSPP. Residues 12729–12740 are compositionally biased toward polar residues; it reads TMHSETNITTTI. 3 stretches are compositionally biased toward basic and acidic residues: residues 12766–12839, 12852–12865, and 12889–12940; these read ESAK…KNKS, ETKK…EVPK, and PADD…DDKS. Positions 12797–12828 form a coiled coil; it reads KKSEKKDEVTAEKQSTEALIESKKKEVDESKI. Positions 12980-13103 form a coiled coil; that stretch reads AEVNKAKKQK…LKLEEESAAK (124 aa). Basic and acidic residues-rich tracts occupy residues 13065–13124, 13133–13145, 13176–13191, 13203–13261, 13283–13327, 13337–13354, and 13361–13416; these read AAEA…KAGE, PTSK…KDVG, TDSE…DEPT, EADK…LNDK, QAQA…EKQA, AVKK…EANK, and LKIE…DEKP. Positions 13237-13380 form a coiled coil; the sequence is LDAQEKIKKV…SKQTVEEQAK (144 aa). Over residues 13431–13442 the composition is skewed to polar residues; that stretch reads SISQKSETSKTV. Residues 13452–13514 are compositionally biased toward basic and acidic residues; it reads ETQKVADAAR…KQKEKDEQLK (63 aa). The stretch at 13455 to 13628 forms a coiled coil; the sequence is KVADAARKQK…ETKSKQTEEA (174 aa). Residues 13594-13637 show a composition bias toward basic and acidic residues; that stretch reads EKLAQEQSRLEDEAKKSAEKQKLESETKSKQTEEAPKESVDEKP. Low complexity predominate over residues 13651 to 13662; sequence SSISQKSKSAKS. A compositionally biased stretch (polar residues) spans 13684 to 13696; the sequence is KVEQSPDESTSAT. Residues 13697 to 13735 show a composition bias toward basic and acidic residues; it reads IKRDPAQKTEEISKQDDGDEKKTTTDGKPPKPEDSEATP. Positions 13747 to 13760 are enriched in low complexity; the sequence is SDSVASDASLADVS. A compositionally biased stretch (basic and acidic residues) spans 13761 to 13770; sequence KLSDDVEEKP. Residues 13784–13793 are compositionally biased toward polar residues; it reads SVISETSSVD. 2 stretches are compositionally biased toward basic and acidic residues: residues 13795 to 13808 and 13824 to 13843; these read IKPE…EKAE and SEPK…DMMT. The 74-residue stretch at 13963 to 14036 folds into the Ig-like 13 domain; sequence PVDFVKYLPR…RAKYEDSGKY (74 aa). Fibronectin type-III domains follow at residues 14153–14247, 14253–14348, and 14350–14448; these read APGD…TGSP, VEFP…TVEG, and VPEI…VLAD. Ig-like domains are found at residues 14451–14542, 14550–14634, and 14638–14727; these read PRVL…VGIS, SSFS…VIVN, and PHIL…LVFE. Residues Cys14568 and Cys14618 are joined by a disulfide bond. 2 Fibronectin type-III domains span residues 14826-14920 and 14937-15027; these read APCD…TLES and ILRT…LVPG. The tract at residues 15011-15180 is disordered; sequence VSSPSEETNP…TGKETTEKKK (170 aa). 2 stretches are compositionally biased toward basic and acidic residues: residues 15034-15060 and 15085-15117; these read KTEK…EKQV and KVAE…ESRR. Residues 15118–15132 are compositionally biased toward polar residues; sequence GSLQASSDNESVTTT. Residues 15133 to 15177 are compositionally biased toward basic and acidic residues; the sequence is SEKRSEAELEKNSEKSAEKKSTSADLEAADKAETEKSETGKETTE. 2 consecutive Ig-like domains span residues 15180–15274 and 15283–15371; these read KKVV…VSIA and PKVE…IALR. 2 Fibronectin type-III domains span residues 15383 to 15475 and 15503 to 15596; these read PTGP…LKKK and QIGK…TTES. A disordered region spans residues 15470-15503; it reads TTLKKKEETGKQKSEKSESDEKKSESDKVSELKQ. Positions 15473–15503 are enriched in basic and acidic residues; it reads KKKEETGKQKSEKSESDEKKSESDKVSELKQ. Ig-like domains follow at residues 15599-15687 and 15692-15786; these read PAFT…CKLT and PEIN…IQVT. The Fibronectin type-III 10 domain occupies 15791-15883; sequence APGKPAVEDQ…DESELVVVKN (93 aa). Residues 15934 to 16189 enclose the Protein kinase domain; that stretch reads YIIHEELGKG…VQDALRHPWI (256 aa). ATP contacts are provided by residues 15940-15948 and Lys15963; that span reads LGKGAYGTV. Catalysis depends on Asp16055, which acts as the Proton acceptor. Residues 16206-16264 form an autoinhibitory domain region; that stretch reads KMQPKLDKSGVPARQKRNFLSLKRWSDDLLPIGRLAKRGAIFRRLTMDGVFERNIAFDT. Ig-like domains lie at 16268–16358, 16500–16575, 16605–16692, and 16705–16789; these read PSVK…AKLS, GKQL…VAKN, PRFR…FSVV, and PKFL…KDFT. Intrachain disulfides connect Cys16290–Cys16342, Cys16508–Cys16571, Cys16627–Cys16677, and Cys16726–Cys16778. The interval 16805–16827 is disordered; that stretch reads LTPVRSRSRSRSRSPSVVGGEIQ. 3 Ig-like domains span residues 16829 to 16918, 16932 to 17025, and 17037 to 17126; these read PPVV…AIVV, PTFV…LTIS, and PYFI…TEVS. The disordered stretch occupies residues 17121 to 17169; the sequence is QNTEVSVTKSKEVKEKKEKKKVEKKDEGKKKPGRPGLPRPSGASKTEQV. The span at 17129-17150 shows a compositional bias: basic and acidic residues; the sequence is KSKEVKEKKEKKKVEKKDEGKK. A Fibronectin type-III 11 domain is found at 17154–17245; the sequence is RPGLPRPSGA…MTSTLKTASV (92 aa). 11 consecutive Ig-like domains span residues 17249 to 17336, 17358 to 17447, 17457 to 17548, 17570 to 17661, 17676 to 17765, 17782 to 17873, 18008 to 18097, 18121 to 18213, 18224 to 18316, 18329 to 18417, and 18429 to 18519; these read PQFT…CQVT, PTLQ…CNVA, PSFS…VMIA, PRFT…TQVI, PKFT…QATT, PRFV…LNVS, PKFM…SEID, PNFI…LQVS, PPLF…MQLD, PRVF…LELT, and PKFN…MILS. 2 disulfide bridges follow: Cys17379–Cys17431 and Cys17478–Cys17530. An intrachain disulfide couples Cys17697 to Cys17754. Cys18143 and Cys18195 are joined by a disulfide.

Belongs to the protein kinase superfamily. CAMK Ser/Thr protein kinase family. In terms of assembly, interacts (via C-terminus) with myosin. Interacts with actin. Requires Mg(2+) as cofactor. As to expression, expression is restricted to body wall, enteric and vulval muscles.

The protein localises to the cytoplasm. It is found in the myofibril. It localises to the sarcomere. The protein resides in the a band. Its subcellular location is the i band. The protein localises to the nucleus membrane. It catalyses the reaction L-seryl-[protein] + ATP = O-phospho-L-seryl-[protein] + ADP + H(+). It carries out the reaction L-threonyl-[protein] + ATP = O-phospho-L-threonyl-[protein] + ADP + H(+). Serine/threonine-protein kinase. Key component in the assembly and functioning of muscles. By providing connections at the level of individual microfilaments, it contributes to the fine balance of forces between the two halves of the sarcomere. The size and extensibility of the cross-links are the main determinants of sarcomere extensibility properties of muscle. In non-muscle cells, seems to play a role in chromosome condensation and chromosome segregation during mitosis. Might link the lamina network to chromatin or nuclear actin, or both during interphase. The polypeptide is Titin homolog (Caenorhabditis elegans).